A 431-amino-acid chain; its full sequence is Keratin, type I cytoskeletal 40 (431 aa).

The head stretch occupies residues 1 to 89; the sequence is MASEGSPDCC…CEEGTFNSNE (89 aa). The region spanning 89 to 400 is the IF rod domain; the sequence is EKETMQFLND…GLLEKEDSRL (312 aa). Positions 90–124 are coil 1A; the sequence is KETMQFLNDRLASYLERVRSLEENNAELECRIREQ. Positions 125-135 are linker 1; that stretch reads CEPDATPVCPD. The segment at 136-236 is coil 1B; sequence YQRYFDTIEE…HEEEVNLLRE (101 aa). The interval 237 to 252 is linker 12; sequence QLGDRLNVELDTAPTV. Residues 253–396 form a coil 2 region; that stretch reads DLNKVLDEMR…NTYRGLLEKE (144 aa). Residues 397–431 are tail; sequence DSRLPCNPGSTASISNSACEPCSAYVICTVENCCA.

Belongs to the intermediate filament family. Heterotetramer of two type I and two type II keratins.

May play a role in late hair differentiation. The polypeptide is Keratin, type I cytoskeletal 40 (Krt40) (Rattus norvegicus (Rat)).